Consider the following 269-residue polypeptide: 2-dehydro-3-deoxyphosphooctonate aldolase (269 aa).

This sequence belongs to the KdsA family.

It is found in the cytoplasm. The catalysed reaction is D-arabinose 5-phosphate + phosphoenolpyruvate + H2O = 3-deoxy-alpha-D-manno-2-octulosonate-8-phosphate + phosphate. The protein operates within carbohydrate biosynthesis; 3-deoxy-D-manno-octulosonate biosynthesis; 3-deoxy-D-manno-octulosonate from D-ribulose 5-phosphate: step 2/3. It functions in the pathway bacterial outer membrane biogenesis; lipopolysaccharide biosynthesis. This chain is 2-dehydro-3-deoxyphosphooctonate aldolase (kdsA), found in Chlamydophila psittaci (strain ATCC VR-125 / 6BC) (Chlamydia psittaci).